Consider the following 430-residue polypeptide: Phosphomethylpyrimidine synthase (430 aa).

Residues N68, M96, Y125, H164, 186-188 (SRG), 227-230 (DALR), and E266 contribute to the substrate site. H270 contacts Zn(2+). Y293 is a substrate binding site. H334 is a binding site for Zn(2+). [4Fe-4S] cluster contacts are provided by C410, C413, and C417.

This sequence belongs to the ThiC family. [4Fe-4S] cluster is required as a cofactor.

The enzyme catalyses 5-amino-1-(5-phospho-beta-D-ribosyl)imidazole + S-adenosyl-L-methionine = 4-amino-2-methyl-5-(phosphooxymethyl)pyrimidine + CO + 5'-deoxyadenosine + formate + L-methionine + 3 H(+). It functions in the pathway cofactor biosynthesis; thiamine diphosphate biosynthesis. Functionally, catalyzes the synthesis of the hydroxymethylpyrimidine phosphate (HMP-P) moiety of thiamine from aminoimidazole ribotide (AIR) in a radical S-adenosyl-L-methionine (SAM)-dependent reaction. The polypeptide is Phosphomethylpyrimidine synthase (Pyrobaculum aerophilum (strain ATCC 51768 / DSM 7523 / JCM 9630 / CIP 104966 / NBRC 100827 / IM2)).